Reading from the N-terminus, the 176-residue chain is Adenine phosphoribosyltransferase (176 aa).

It belongs to the purine/pyrimidine phosphoribosyltransferase family. In terms of assembly, homodimer.

The protein localises to the cytoplasm. It catalyses the reaction AMP + diphosphate = 5-phospho-alpha-D-ribose 1-diphosphate + adenine. The protein operates within purine metabolism; AMP biosynthesis via salvage pathway; AMP from adenine: step 1/1. In terms of biological role, catalyzes a salvage reaction resulting in the formation of AMP, that is energically less costly than de novo synthesis. The protein is Adenine phosphoribosyltransferase of Borrelia garinii subsp. bavariensis (strain ATCC BAA-2496 / DSM 23469 / PBi) (Borreliella bavariensis).